A 316-amino-acid chain; its full sequence is N-acetyl-gamma-glutamyl-phosphate reductase (316 aa).

The active site involves C136.

This sequence belongs to the NAGSA dehydrogenase family. Type 1 subfamily.

The protein localises to the cytoplasm. It carries out the reaction N-acetyl-L-glutamate 5-semialdehyde + phosphate + NADP(+) = N-acetyl-L-glutamyl 5-phosphate + NADPH + H(+). The protein operates within amino-acid biosynthesis; L-arginine biosynthesis; N(2)-acetyl-L-ornithine from L-glutamate: step 3/4. Catalyzes the NADPH-dependent reduction of N-acetyl-5-glutamyl phosphate to yield N-acetyl-L-glutamate 5-semialdehyde. This chain is N-acetyl-gamma-glutamyl-phosphate reductase, found in Xanthomonas campestris pv. campestris (strain B100).